The sequence spans 595 residues: MVLMMESQCEYFMYFPAVPISDLSDPAKYRTLPRRSHLYLGETVRFLLVLRSQSASGSSDGSCGSEQHSSRSWRELAGSLSAVASVSPGDSRQRTQPLYHDYHSSGDECVEDTDEDDAAEAVGCPGRGGPRYRGFRECKPLLIHNNPGNGVREFRRAPVQSPVDEPVVLSDEVIFPLTVSLDKLPVNTLKVKIIVTVWKQEEEKAEIQEHGYLSILQQKSPCQTFRQDLNTFKAQVSTTLNVLPPPTVKCQQMTVSGRHLTVLKVLNGSSQEEVCVRDVKILPNFNASYLPMMPDGSVLLVDNVCHQSGEVAMASFYRMDSESSHLPSMLSALEEQNFLFQLQLNNQPQDDSNEGLEVPLVAVLQWSTSKLPFTNSIYTHYSLPSIRLDRPRFIMTASCPSAVRTRENFRVRYTLLNNLQDFLAVRLVWTPEGRGQKEDPAVNAVVCHSPLSNLGYCRKGSTLSVSVAFQILRAGLFELSQHMKLKLQFTASVSNPPPDARPLSRKNSPSSPAVRDILDRHQASLSLGRSQSFSHQQPSKFHLTRTGSVMERRAITPPVGSPVGRPLYLPPDRNILSLDKIAKRECKVLVLDSHN.

Disordered regions lie at residues 84 to 111 (ASVS…ECVE) and 494 to 513 (SNPP…SSPA).

As to quaternary structure, component of the multisubunit TRAPP II complex, which includes at least TRAPPC1, TRAPPC2, TRAPPC2L, TRAPPC3, TRAPPC4, TRAPPC5, TRAPPC6A/B, TRAPPC9, TRAPPC10 and TRAPPC14. TRAPPC9, TRAPPC10 and TRAPPC14 are specific subunits of the TRAPP II complex. Interacts with alpha-tubulin during mitosis.

It localises to the cytoplasm. The protein resides in the cytoskeleton. Its subcellular location is the spindle. The protein localises to the vesicle. It is found in the midbody. Functionally, specific subunit of the TRAPP (transport protein particle) II complex, a highly conserved vesicle tethering complex that functions in late Golgi trafficking as a membrane tether. TRAPP II complex also has GEF activity toward RAB1A. TRAPPC14 is required for ciliogenesis. The polypeptide is Trafficking protein particle complex subunit 14 (trappc14) (Danio rerio (Zebrafish)).